The primary structure comprises 1484 residues: Chromatin remodeling regulator CECR2 (1484 aa).

Residues 170–241 are disordered; the sequence is VQGKSNGELS…RHGSQGPGQG (72 aa). Positions 197–209 are enriched in basic residues; it reads TGKRRGRPPKRKK. Over residues 210 to 222 the composition is skewed to basic and acidic residues; that stretch reads LQEEILLSEKQEE. Residues 223-234 show a composition bias toward polar residues; that stretch reads NSLASEPQTRHG. Ser422 is modified (phosphoserine). Residues 434–538 enclose the Bromo domain; the sequence is FELDDDFTAM…RCFHRAMMKH (105 aa). The residue at position 546 (Thr546) is a Phosphothreonine. Disordered regions lie at residues 556–704, 796–825, 919–1053, 1165–1259, 1287–1320, and 1442–1484; these read EKRE…GPRL, GNHG…PRTL, GVPY…SYPG, VMGG…LFSD, AKVP…LDLD, and YRPS…LDQS. Ser571 is subject to Phosphoserine. Residues 605–614 show a composition bias toward low complexity; sequence SSGDDQSSSS. Ser1014 is modified (phosphoserine). Asymmetric dimethylarginine occurs at positions 1197 and 1203. A compositionally biased stretch (pro residues) spans 1243 to 1254; it reads SGPPASQPPPPR. A compositionally biased stretch (basic and acidic residues) spans 1304 to 1320; that stretch reads DESMERPESPKEFLDLD. Phosphoserine is present on Ser1312. Residues 1451–1469 are compositionally biased toward polar residues; that stretch reads PVQSQASFPKTPTAATSQE. The span at 1474-1484 shows a compositional bias: pro residues; it reads HKPPTLPLDQS.

As to quaternary structure, component of the CERF-1 ISWI chromatin remodeling complex (also called the CECR2-containing remodeling factor (CERF) complex) at least composed of CECR2 and SMARCA1. Component of the CERF-5 ISWI chromatin remodeling complex at least composed of SMARCA5/SNF2H and CECR2. LUZP1 is detected as part of the CERF-1 and CERF-5 complexes in embryonic stem (ES) cells where it is involved in complex stabilization but is not detected in the complexes in the testis. Interacts with CCAR2; CCAR2 may form part of the CERF-1 and/or CEF-5 ISWI chromatin remodeling complexes in ES cells. Interacts with acetylated lysine residues on histone H2A and H3 (in vitro). Interacts with LRPPRC. Highly expressed in skeletal muscle, thymus, placenta and lung. Expressed at lower level in brain, heart, colon, spleen, kidney.

The protein resides in the nucleus. Its function is as follows. Regulatory subunit of the ATP-dependent CERF-1 and CERF-5 ISWI chromatin remodeling complexes, which form ordered nucleosome arrays on chromatin and facilitate access to DNA during DNA-templated processes such as DNA replication, transcription, and repair. The complexes do not have the ability to slide mononucleosomes to the center of a DNA template. The CERF-1 ISWI chromatin remodeling complex has a lower ATP hydrolysis rate than the CERF-5 ISWI chromatin remodeling complex. Plays a role in various processes during development: required during embryogenesis for neural tube closure and inner ear development. In adults, required for spermatogenesis, via the formation of ISWI-type chromatin complexes. In histone-modifying complexes, CECR2 recognizes and binds acylated histones: binds histones that are acetylated and/or butyrylated. May also be involved through its interaction with LRPPRC in the integration of cytoskeletal network with vesicular trafficking, nucleocytosolic shuttling, transcription, chromosome remodeling and cytokinesis. The protein is Chromatin remodeling regulator CECR2 (CECR2) of Homo sapiens (Human).